We begin with the raw amino-acid sequence, 577 residues long: F-box-like/WD repeat-containing protein TBL1X (577 aa).

Residues Thr55–Gln87 form the LisH domain. The region spanning Gly92–Ala137 is the F-box-like domain. Lys153 is modified (N6-acetyllysine). Residues Thr177–Ala202 are disordered. A Phosphoserine modification is found at Ser183. WD repeat units follow at residues Gly230 to Ser269, Pro286 to Leu325, Gln327 to Gln366, Phe369 to Gln409, Gly410 to Asp449, Ala452 to Thr500, Lys503 to Ser542, and Arg544 to Arg576. Lys340 participates in a covalent cross-link: Glycyl lysine isopeptide (Lys-Gly) (interchain with G-Cter in SUMO2).

The protein belongs to the WD repeat EBI family. Homotetramer; dimer of dimers. Component of the N-Cor repressor complex, at least composed of NCOR1, NCOR2, HDAC3, TBL1X, TBL1R, CORO2A and GPS2. Interacts with GPS2 (when sumoylated); leading to protect GPS2 against degradation by the proteasome. Component of a E3 ubiquitin ligase complex containing UBE2D1, SIAH1, CACYBP/SIP, SKP1, APC and TBL1X. Probably part of other corepressor complexes, that do not contain NCOR1 and NCOR2. Interacts with histones H2B, H3a and H4. Interacts with MECP2; recruits TBL1X to the heterochromatin foci. Interacts with USP44. In terms of tissue distribution, ubiquitous.

The protein localises to the nucleus. F-box-like protein involved in the recruitment of the ubiquitin/19S proteasome complex to nuclear receptor-regulated transcription units. Plays an essential role in transcription activation mediated by nuclear receptors. Probably acts as integral component of corepressor complexes that mediates the recruitment of the 19S proteasome complex, leading to the subsequent proteasomal degradation of transcription repressor complexes, thereby allowing cofactor exchange. In Homo sapiens (Human), this protein is F-box-like/WD repeat-containing protein TBL1X (TBL1X).